The sequence spans 416 residues: MLSLILFFPSFAFAVTPVTPYFGPLYITFNCCLFGDSRSDCTKVQSPMSLDNPQNFCPNFSLKSSSSMFFSIHYNNHSSLVLFDNFNCRIEKVYYNGVNLSPRNQYSCYDEGVDSYMELKTSFNIKLNQMATILRCIKLIQLKARSSFTTLQDVVCRTNKYLPNNPTFALLSDTVPTWVQFVLPDLSGKTICIKYLVPFCHLNHGCFTAGSSCPPFGVSYVSDSFNYGFNDATPYIGLAESHDNVCDYLFVEAGTHNASIVGNFLFYPTKSYCFNTMNFTVPVQAIQSIWSEGNESDDAIAEACKPPFCIYYSKTTPYTVTNGSNADHRDDEVRMMVRGLLYNSSCISAQGSTPLALYSTAMLYAPIYGSCPQYVKLFDTSGSESVDVISSSYFVATWVLLVVVVILIFVIISFFC.

Positions 1–14 (MLSLILFFPSFAFA) are cleaved as a signal peptide. The interval 4–121 (LILFFPSFAF…GVDSYMELKT (118 aa)) is esterase domain first part. Over 15–393 (VTPVTPYFGP…ESVDVISSSY (379 aa)) the chain is Virion surface. Ser37 serves as the catalytic Nucleophile. Cys41 and Cys57 are disulfide-bonded. Residues Asn59 and Asn76 are each glycosylated (N-linked (GlcNAc...) asparagine; by host). Intrachain disulfides connect Cys88–Cys136, Cys108–Cys156, Cys192–Cys273, Cys200–Cys246, and Cys206–Cys213. The interval 122–263 (SFNIKLNQMA…GTHNASIVGN (142 aa)) is receptor binding. N-linked (GlcNAc...) asparagine; by host glycans are attached at residues Asn257, Asn278, and Asn294. The interval 264–379 (FLFYPTKSYC…SCPQYVKLFD (116 aa)) is esterase domain second part. A disulfide bridge connects residues Cys304 and Cys309. An N-linked (GlcNAc...) asparagine; by host glycan is attached at Asn322. The active-site Charge relay system is the His328. Asn343 is a glycosylation site (N-linked (GlcNAc...) asparagine; by host). A disulfide bond links Cys346 and Cys371. The helical transmembrane segment at 394–414 (FVATWVLLVVVVILIFVIISF) threads the bilayer. The Intravirion portion of the chain corresponds to 415–416 (FC).

This sequence belongs to the influenza type C/coronaviruses hemagglutinin-esterase family. Homodimer. In terms of processing, N-glycosylated.

Its subcellular location is the virion membrane. It is found in the host cell membrane. It carries out the reaction N-acetyl-9-O-acetylneuraminate + H2O = N-acetylneuraminate + acetate + H(+). The catalysed reaction is N-acetyl-4-O-acetylneuraminate + H2O = N-acetylneuraminate + acetate + H(+). In terms of biological role, structural protein that makes short spikes at the surface of the virus. Contains receptor binding and receptor-destroying activities. Mediates de-O-acetylation of N-acetyl-9-O-acetylneuraminic acid, which is probably the receptor determinant recognized by the virus on the surface of erythrocytes and susceptible cells. This receptor-destroying activity is important for virus release as it probably helps preventing self-aggregation and ensures the efficient spread of the progeny virus from cell to cell. May serve as a secondary viral attachment protein for initiating infection, the spike protein being the major one. Seems to be a 'luxury' protein that is not absolutely necessary for virus infection in culture. However, its presence in the virus may alter its pathogenicity. May become a target for both the humoral and the cellular branches of the immune system. This chain is Hemagglutinin-esterase (HE), found in Homo sapiens (Human).